We begin with the raw amino-acid sequence, 339 residues long: Centrosomal protein of 41 kDa (339 aa).

The segment at arginine 56–aspartate 99 is disordered. 2 positions are modified to phosphoserine: serine 62 and serine 65. Low complexity predominate over residues serine 62–alanine 73. Threonine 75 carries the post-translational modification Phosphothreonine. A phosphoserine mark is found at serine 80 and serine 87. The span at glutamate 82–aspartate 99 shows a compositional bias: polar residues. The Rhodanese domain maps to proline 135–valine 232. Positions aspartate 283–lysine 339 are disordered. Positions proline 286 to alanine 299 are enriched in polar residues. An Omega-N-methylarginine modification is found at arginine 309. A compositionally biased stretch (polar residues) spans asparagine 313–histidine 332.

Belongs to the CEP41 family. Found in a complex with TTLL6.

Its subcellular location is the cytoplasm. The protein resides in the cytoskeleton. The protein localises to the microtubule organizing center. It localises to the centrosome. It is found in the cell projection. Its subcellular location is the cilium. The protein resides in the cilium basal body. Functionally, required during ciliogenesis for tubulin glutamylation in cilium. Probably acts by participating in the transport of TTLL6, a tubulin polyglutamylase, between the basal body and the cilium. The polypeptide is Centrosomal protein of 41 kDa (Cep41) (Rattus norvegicus (Rat)).